We begin with the raw amino-acid sequence, 202 residues long: Imidazoleglycerol-phosphate dehydratase (202 aa).

The protein belongs to the imidazoleglycerol-phosphate dehydratase family.

It is found in the cytoplasm. It carries out the reaction D-erythro-1-(imidazol-4-yl)glycerol 3-phosphate = 3-(imidazol-4-yl)-2-oxopropyl phosphate + H2O. Its pathway is amino-acid biosynthesis; L-histidine biosynthesis; L-histidine from 5-phospho-alpha-D-ribose 1-diphosphate: step 6/9. The sequence is that of Imidazoleglycerol-phosphate dehydratase from Rhodopirellula baltica (strain DSM 10527 / NCIMB 13988 / SH1).